We begin with the raw amino-acid sequence, 179 residues long: MGITAGKSMLALLAFLAFASCCYAAYRPSETLCGGELVDTLQFVCGDRGFYFSRPSSRINRRSRGIVEECCFRSCDLALLETYCAAPAKSERDVSASTTVLPDDFTAYPVGKFFQSDTWKQSTQRLRRGLPAFLRARRGRTLAKELEALREAKSHRPLIALPTQDPATHGGASSEASSD.

Positions 1 to 24 are cleaved as a signal peptide; it reads MGITAGKSMLALLAFLAFASCCYA. The tract at residues 25–52 is b; sequence AYRPSETLCGGELVDTLQFVCGDRGFYF. Intrachain disulfides connect C33–C71, C45–C84, and C70–C75. The segment at 53–64 is c; sequence SRPSSRINRRSR. Residues 65–85 form an a region; it reads GIVEECCFRSCDLALLETYCA. Residues 86 to 91 are d; it reads APAKSE. Residues 92–179 constitute a propeptide, e peptide; it reads RDVSASTTVL…GGASSEASSD (88 aa). T106 carries an O-linked (GalNAc...) threonine glycan. Residue S154 is glycosylated (O-linked (GalNAc...) serine). The segment at 160 to 179 is disordered; it reads ALPTQDPATHGGASSEASSD. O-linked (GalNAc...) threonine glycosylation is present at T163.

The protein belongs to the insulin family. In terms of assembly, interacts with MYORG; this interaction is required for IGF2 secretion. Interacts with integrins ITGAV:ITGB3 and ITGA6:ITGB4; integrin-binding is required for IGF2 signaling. Interacts with IGFBP2. In terms of processing, proteolytically processed by PCSK4, proIGF2 is cleaved at Arg-128 and Arg-92 to generate big-IGF2 and mature IGF2.

The protein resides in the secreted. In terms of biological role, the insulin-like growth factors possess growth-promoting activity. Major fetal growth hormone in mammals. Plays a key role in regulating fetoplacental development. IGF2 is influenced by placental lactogen. Also involved in tissue differentiation. In adults, involved in glucose metabolism in adipose tissue, skeletal muscle and liver. Acts as a ligand for integrin which is required for IGF2 signaling. Positively regulates myogenic transcription factor MYOD1 function by facilitating the recruitment of transcriptional coactivators, thereby controlling muscle terminal differentiation. Inhibits myoblast differentiation and modulates metabolism via increasing the mitochondrial respiration rate. Its function is as follows. Preptin undergoes glucose-mediated co-secretion with insulin, and acts as a physiological amplifier of glucose-mediated insulin secretion. Exhibits osteogenic properties by increasing osteoblast mitogenic activity through phosphoactivation of MAPK1 and MAPK3. The sequence is that of Insulin-like growth factor 2 from Ovis aries (Sheep).